The sequence spans 193 residues: MAKDVQKVAKLQFLAGKAKPGPSLAGVGVNMPEFTKAFNDATRDRGDEPVPVQITVFKDKTFEFKLFTAPASYKIKQAAKIQSGSKNAKTTIAGTITLEQLKEIAEYKLPDLNTDDVNAAMAIVAGTAKQMGVLVEGYDDVAKAKQAAIEAAKAESLAKAKKESLKSQEEELKASKGKAIDVNVIEKEREEKE.

This sequence belongs to the universal ribosomal protein uL11 family. In terms of assembly, part of the ribosomal stalk of the 50S ribosomal subunit. Interacts with L10 and the large rRNA to form the base of the stalk. L10 forms an elongated spine to which L12 dimers bind in a sequential fashion forming a multimeric L10(L12)X complex. Post-translationally, one or more lysine residues are methylated.

Functionally, forms part of the ribosomal stalk which helps the ribosome interact with GTP-bound translation factors. The polypeptide is Large ribosomal subunit protein uL11 (Mycoplasmopsis synoviae (strain 53) (Mycoplasma synoviae)).